The chain runs to 366 residues: Ribosomal RNA large subunit methyltransferase M (366 aa).

S-adenosyl-L-methionine-binding positions include Ser-188, 221 to 224 (CPGG), Asp-240, Asp-260, and Asp-277. Lys-306 (proton acceptor) is an active-site residue.

This sequence belongs to the class I-like SAM-binding methyltransferase superfamily. RNA methyltransferase RlmE family. RlmM subfamily. In terms of assembly, monomer.

The protein resides in the cytoplasm. The enzyme catalyses cytidine(2498) in 23S rRNA + S-adenosyl-L-methionine = 2'-O-methylcytidine(2498) in 23S rRNA + S-adenosyl-L-homocysteine + H(+). Its function is as follows. Catalyzes the 2'-O-methylation at nucleotide C2498 in 23S rRNA. The chain is Ribosomal RNA large subunit methyltransferase M from Erwinia tasmaniensis (strain DSM 17950 / CFBP 7177 / CIP 109463 / NCPPB 4357 / Et1/99).